The sequence spans 78 residues: Small venom protein 2 (78 aa).

The signal sequence occupies residues 1–19 (MKFIVLLGALLALLVAVSA). Positions 20–42 (DRIAREAPEMESVDEAVLTRQAR) are excised as a propeptide.

As to expression, expressed by the venom gland.

It is found in the secreted. This chain is Small venom protein 2, found in Pimpla hypochondriaca (Parasitoid wasp).